Consider the following 1031-residue polypeptide: Beta-galactosidase (1031 aa).

Residues Asn100 and Asp198 each contribute to the substrate site. Position 198 (Asp198) interacts with Na(+). Mg(2+) contacts are provided by Glu412, His414, and Glu457. Substrate contacts are provided by residues Glu457 and 533-536 (EYAH). Glu457 serves as the catalytic Proton donor. Glu533 functions as the Nucleophile in the catalytic mechanism. Asn593 is a binding site for Mg(2+). Phe597 and Asn600 together coordinate Na(+). 2 residues coordinate substrate: Asn600 and Trp1005.

Belongs to the glycosyl hydrolase 2 family. In terms of assembly, homotetramer. It depends on Mg(2+) as a cofactor. The cofactor is Na(+).

It catalyses the reaction Hydrolysis of terminal non-reducing beta-D-galactose residues in beta-D-galactosides.. This chain is Beta-galactosidase, found in Vibrio vulnificus (strain YJ016).